Consider the following 428-residue polypeptide: Glutamate-1-semialdehyde 2,1-aminomutase (428 aa).

Lys265 carries the post-translational modification N6-(pyridoxal phosphate)lysine.

This sequence belongs to the class-III pyridoxal-phosphate-dependent aminotransferase family. HemL subfamily. In terms of assembly, homodimer. It depends on pyridoxal 5'-phosphate as a cofactor.

The protein resides in the cytoplasm. The enzyme catalyses (S)-4-amino-5-oxopentanoate = 5-aminolevulinate. The protein operates within porphyrin-containing compound metabolism; protoporphyrin-IX biosynthesis; 5-aminolevulinate from L-glutamyl-tRNA(Glu): step 2/2. This is Glutamate-1-semialdehyde 2,1-aminomutase from Ruthia magnifica subsp. Calyptogena magnifica.